Reading from the N-terminus, the 448-residue chain is tRNA(Ile)-lysidine synthase (448 aa).

An ATP-binding site is contributed by 25 to 30; sequence SGGSDS.

This sequence belongs to the tRNA(Ile)-lysidine synthase family.

Its subcellular location is the cytoplasm. The enzyme catalyses cytidine(34) in tRNA(Ile2) + L-lysine + ATP = lysidine(34) in tRNA(Ile2) + AMP + diphosphate + H(+). Functionally, ligates lysine onto the cytidine present at position 34 of the AUA codon-specific tRNA(Ile) that contains the anticodon CAU, in an ATP-dependent manner. Cytidine is converted to lysidine, thus changing the amino acid specificity of the tRNA from methionine to isoleucine. The polypeptide is tRNA(Ile)-lysidine synthase (Brucella abortus (strain S19)).